Here is a 495-residue protein sequence, read N- to C-terminus: Zinc finger and SCAN domain-containing protein 5B (495 aa).

The segment at 1–40 is disordered; the sequence is MAANWTLSWGQGGPCNSPGSDTPRSVASPETQLGNHDRNP. Residues 17–34 show a composition bias toward polar residues; the sequence is SPGSDTPRSVASPETQLG. Residues 44–126 form the SCAN box domain; the sequence is HMNFRMFSCP…DLLRNNRRPK (83 aa). 2 disordered regions span residues 150-183 and 227-347; these read APAS…RREQ and ENRE…PDGQ. Positions 161–173 are enriched in polar residues; that stretch reads VSSQWASSVNQMH. The segment covering 250-262 has biased composition (basic and acidic residues); the sequence is RAKEGKEPQKRAS. A compositionally biased stretch (polar residues) spans 292–310; sequence NLSSPKRSKPDASSISQEE. 5 consecutive C2H2-type zinc fingers follow at residues 355–377, 383–405, 411–433, 439–461, and 467–489; these read FACD…RRSH, FQCD…QRVH, YMCD…KRIH, FKCK…QRTH, and YKCP…LKTH.

It is found in the nucleus. Functionally, may be involved in transcriptional regulation. This chain is Zinc finger and SCAN domain-containing protein 5B (ZSCAN5B), found in Homo sapiens (Human).